Reading from the N-terminus, the 145-residue chain is Venom protein 30.1 (145 aa).

The first 18 residues, 1–18, serve as a signal peptide directing secretion; it reads MIIVKLFTCLLMVSSVLT.

Post-translationally, contains 5 disulfide bonds. As to expression, expressed by the venom gland.

It is found in the secreted. This is Venom protein 30.1 from Lychas mucronatus (Chinese swimming scorpion).